A 419-amino-acid chain; its full sequence is UDP-N-acetylglucosamine 1-carboxyvinyltransferase (419 aa).

22 to 23 is a binding site for phosphoenolpyruvate; sequence KN. Arg-91 contributes to the UDP-N-acetyl-alpha-D-glucosamine binding site. The Proton donor role is filled by Cys-115. Position 115 is a 2-(S-cysteinyl)pyruvic acid O-phosphothioketal (Cys-115). Residues 120 to 124, 160 to 163, Asp-305, and Ile-327 contribute to the UDP-N-acetyl-alpha-D-glucosamine site; these read RPVDL and KVSV.

The protein belongs to the EPSP synthase family. MurA subfamily.

The protein resides in the cytoplasm. The catalysed reaction is phosphoenolpyruvate + UDP-N-acetyl-alpha-D-glucosamine = UDP-N-acetyl-3-O-(1-carboxyvinyl)-alpha-D-glucosamine + phosphate. Its pathway is cell wall biogenesis; peptidoglycan biosynthesis. Cell wall formation. Adds enolpyruvyl to UDP-N-acetylglucosamine. This Klebsiella pneumoniae (strain 342) protein is UDP-N-acetylglucosamine 1-carboxyvinyltransferase.